We begin with the raw amino-acid sequence, 624 residues long: Histone-lysine N-methyltransferase, H3 lysine-9 specific SUVH4 (624 aa).

2 disordered regions span residues 1 to 25 (MAGK…VQKV) and 54 to 86 (DDTE…KGKQ). Residues 149 to 302 (GDLPGIDVGH…FTVYKYRLKR (154 aa)) form the YDG domain. A Pre-SET domain is found at 381 to 443 (TGCNCRGSCT…KCVNRTSQKR (63 aa)). Zn(2+)-binding residues include Cys-383, Cys-385, Cys-389, Cys-395, Cys-397, Cys-425, Cys-429, Cys-431, and Cys-435. Residues 446-594 (FNLEVFRSAK…PMQELTYDYG (149 aa)) enclose the SET domain. Residues 456 to 458 (KGW), Tyr-493, Arg-548, and 551 to 552 (NH) contribute to the S-adenosyl-L-methionine site. Zn(2+) is bound by residues Cys-554, Cys-612, Cys-614, and Cys-619. The Post-SET domain maps to 608–624 (KQLACYCGALNCRKRLY).

It belongs to the class V-like SAM-binding methyltransferase superfamily. Histone-lysine methyltransferase family. Suvar3-9 subfamily. In terms of assembly, interacts with H3 histone. Expressed in leaves stems and flowers.

It localises to the nucleus. Its subcellular location is the chromosome. It is found in the centromere. It catalyses the reaction N(6)-methyl-L-lysyl(9)-[histone H3] + S-adenosyl-L-methionine = N(6),N(6)-dimethyl-L-lysyl(9)-[histone H3] + S-adenosyl-L-homocysteine + H(+). The catalysed reaction is L-lysyl(9)-[histone H3] + S-adenosyl-L-methionine = N(6)-methyl-L-lysyl(9)-[histone H3] + S-adenosyl-L-homocysteine + H(+). Its function is as follows. Histone methyltransferase. Methylates 'Lys-9' of histone H3. H3 'Lys-9' methylation represents a specific tag for epigenetic transcriptional repression. The silencing mechanism via DNA CpNpG methylation requires the targeting of chromomethylase CMT3 to methylated histones, probably through an interaction with an HP1-like adapter. By its function, KYP is directly required for the maintenance of the DNA CpNpG and asymmetric methylation. Involved in the silencing of transposable elements. This chain is Histone-lysine N-methyltransferase, H3 lysine-9 specific SUVH4 (SUVH4), found in Arabidopsis thaliana (Mouse-ear cress).